We begin with the raw amino-acid sequence, 311 residues long: MPPWNRGQWGANFPPPAGTPPYPRSCGLSTGMKNFHLHLVSDATGETVTSVARACLVQFEGVQPIQHNWWLVRTQGQVERVIAGIEDNPGLVFFTLVDGAVRGLLEEACRHRGIPCISLLDPVMAGLSAFLGVEVTALPGRQYQLDAEYFRRIDAMQFTLSHDDGQLIELADQADIVLVGVSRSSKTPTCMYLANRGFKCANYPLVPGVPLPPELERAKKPLVVGLTKDPKSLSDIRRARLRLLNQEEEADYAQFEKVKEEVQQARRIFSRLGWPVVDVTRRSIEEASATIIQLYERHLEKRGLKAEVLPS.

180–187 (GVSRSSKT) serves as a coordination point for ADP.

Belongs to the pyruvate, phosphate/water dikinase regulatory protein family. PDRP subfamily.

The enzyme catalyses N(tele)-phospho-L-histidyl/L-threonyl-[pyruvate, phosphate dikinase] + ADP = N(tele)-phospho-L-histidyl/O-phospho-L-threonyl-[pyruvate, phosphate dikinase] + AMP + H(+). It carries out the reaction N(tele)-phospho-L-histidyl/O-phospho-L-threonyl-[pyruvate, phosphate dikinase] + phosphate + H(+) = N(tele)-phospho-L-histidyl/L-threonyl-[pyruvate, phosphate dikinase] + diphosphate. Bifunctional serine/threonine kinase and phosphorylase involved in the regulation of the pyruvate, phosphate dikinase (PPDK) by catalyzing its phosphorylation/dephosphorylation. The protein is Putative pyruvate, phosphate dikinase regulatory protein of Paramagnetospirillum magneticum (strain ATCC 700264 / AMB-1) (Magnetospirillum magneticum).